We begin with the raw amino-acid sequence, 433 residues long: Keratin, type I cytoskeletal 47 kDa (433 aa).

The tract at residues methionine 1–asparagine 73 is head. The segment at glycine 74–tyrosine 109 is coil 1A. Residues glycine 74–phenylalanine 385 form the IF rod domain. The segment at leucine 110–threonine 127 is linker 1. Residues isoleucine 128–valine 219 are coil 1B. Residues arginine 220–isoleucine 242 are linker 12. A coil 2 region spans residues methionine 243–glutamate 381. The tract at residues aspartate 382 to serine 433 is tail.

It belongs to the intermediate filament family. In terms of assembly, heterotetramer of two type I and two type II keratins.

The chain is Keratin, type I cytoskeletal 47 kDa (xk70a) from Xenopus laevis (African clawed frog).